Reading from the N-terminus, the 328-residue chain is Transcription initiation factor TFIID subunit 8 (328 aa).

A Histone-fold domain is found at 16–83 (RRILNKVVSQ…DVSLALINMG (68 aa)). Residues 229–309 (NRTEDEPSKD…PGTMPSRSLA (81 aa)) are disordered. Phosphoserine is present on residues Ser236, Ser245, and Ser255. The segment covering 239 to 251 (DGEEGDSENEEMD) has biased composition (acidic residues). Positions 252–264 (GDKSKEEKPELDI) are enriched in basic and acidic residues. Over residues 296–309 (NCPTPGTMPSRSLA) the composition is skewed to polar residues.

The protein belongs to the TAF8 family. In terms of assembly, belongs to the TFIID complex which is composed of TATA binding protein (Tbp) and a number of TBP-associated factors (TAFs). Histone fold interacts with N-terminus of Taf10b.

The protein localises to the nucleus. In terms of biological role, TFIID is a multimeric protein complex that plays a central role in mediating promoter responses to various activators and repressors. The protein is Transcription initiation factor TFIID subunit 8 of Drosophila melanogaster (Fruit fly).